The sequence spans 249 residues: Methylthioribulose-1-phosphate dehydratase (249 aa).

The segment at 1–25 is disordered; it reads MVDIKPEQTQEGNNNDHLVQSDDPE. The span at 9–18 shows a compositional bias: polar residues; sequence TQEGNNNDHL. Substrate is bound at residue cysteine 105. Zn(2+) contacts are provided by histidine 122 and histidine 124. The active-site Proton donor/acceptor is the glutamate 151. Histidine 207 is a Zn(2+) binding site.

It belongs to the aldolase class II family. MtnB subfamily. Zn(2+) is required as a cofactor.

Its subcellular location is the cytoplasm. It carries out the reaction 5-(methylsulfanyl)-D-ribulose 1-phosphate = 5-methylsulfanyl-2,3-dioxopentyl phosphate + H2O. It functions in the pathway amino-acid biosynthesis; L-methionine biosynthesis via salvage pathway; L-methionine from S-methyl-5-thio-alpha-D-ribose 1-phosphate: step 2/6. In terms of biological role, catalyzes the dehydration of methylthioribulose-1-phosphate (MTRu-1-P) into 2,3-diketo-5-methylthiopentyl-1-phosphate (DK-MTP-1-P). This Arthroderma otae (strain ATCC MYA-4605 / CBS 113480) (Microsporum canis) protein is Methylthioribulose-1-phosphate dehydratase.